Reading from the N-terminus, the 311-residue chain is Ribosomal protein L11 methyltransferase (311 aa).

Residues Thr163, Gly184, Asp206, and Asn248 each contribute to the S-adenosyl-L-methionine site.

Belongs to the methyltransferase superfamily. PrmA family.

The protein localises to the cytoplasm. The enzyme catalyses L-lysyl-[protein] + 3 S-adenosyl-L-methionine = N(6),N(6),N(6)-trimethyl-L-lysyl-[protein] + 3 S-adenosyl-L-homocysteine + 3 H(+). Its function is as follows. Methylates ribosomal protein L11. The protein is Ribosomal protein L11 methyltransferase of Clostridium acetobutylicum (strain ATCC 824 / DSM 792 / JCM 1419 / IAM 19013 / LMG 5710 / NBRC 13948 / NRRL B-527 / VKM B-1787 / 2291 / W).